The sequence spans 254 residues: Small ribosomal subunit protein uS3 (254 aa).

The KH type-2 domain occupies 38–106 (IRKYVLARIP…DVQINIFEIK (69 aa)). Residues 215–238 (NVGNAASGASSSSNNDNASPNQGG) show a composition bias toward low complexity. Positions 215 to 254 (NVGNAASGASSSSNNDNASPNQGGPRRKRGGEGNRKKSNK) are disordered. The span at 244–254 (GGEGNRKKSNK) shows a compositional bias: basic and acidic residues.

Belongs to the universal ribosomal protein uS3 family. As to quaternary structure, part of the 30S ribosomal subunit. Forms a tight complex with proteins S10 and S14.

Functionally, binds the lower part of the 30S subunit head. Binds mRNA in the 70S ribosome, positioning it for translation. The chain is Small ribosomal subunit protein uS3 from Cytophaga hutchinsonii (strain ATCC 33406 / DSM 1761 / CIP 103989 / NBRC 15051 / NCIMB 9469 / D465).